A 350-amino-acid polypeptide reads, in one-letter code: 3-dehydroquinate synthase (350 aa).

Residues 106–110 (GVVGD), 130–131 (TS), Lys143, and Lys152 each bind NAD(+). Residues Glu185, His246, and His263 each coordinate Zn(2+).

The protein belongs to the sugar phosphate cyclases superfamily. Dehydroquinate synthase family. It depends on Co(2+) as a cofactor. The cofactor is Zn(2+). NAD(+) serves as cofactor.

It is found in the cytoplasm. It catalyses the reaction 7-phospho-2-dehydro-3-deoxy-D-arabino-heptonate = 3-dehydroquinate + phosphate. It participates in metabolic intermediate biosynthesis; chorismate biosynthesis; chorismate from D-erythrose 4-phosphate and phosphoenolpyruvate: step 2/7. Functionally, catalyzes the conversion of 3-deoxy-D-arabino-heptulosonate 7-phosphate (DAHP) to dehydroquinate (DHQ). This chain is 3-dehydroquinate synthase, found in Clostridium perfringens (strain SM101 / Type A).